A 164-amino-acid polypeptide reads, in one-letter code: Large ribosomal subunit protein bL19 (164 aa).

Residues Glu-144–Lys-164 are disordered.

It belongs to the bacterial ribosomal protein bL19 family.

Functionally, this protein is located at the 30S-50S ribosomal subunit interface and may play a role in the structure and function of the aminoacyl-tRNA binding site. The sequence is that of Large ribosomal subunit protein bL19 from Pelagibacter ubique (strain HTCC1062).